The sequence spans 464 residues: Argininosuccinate lyase (464 aa).

Ala2 carries the post-translational modification N-acetylalanine. An N6-acetyllysine modification is found at Lys7. Ser27 serves as a coordination point for 2-(N(omega)-L-arginino)succinate. The residue at position 69 (Lys69) is an N6-acetyllysine. Residues Asn114 and Thr159 each coordinate 2-(N(omega)-L-arginino)succinate. The Proton acceptor role is filled by His160. The active-site Proton donor is Ser281. Lys288 bears the N6-acetyllysine mark. Positions 289, 321, 326, and 329 each coordinate 2-(N(omega)-L-arginino)succinate.

Belongs to the lyase 1 family. Argininosuccinate lyase subfamily. Homotetramer. Forms tissue-specific complexes with ASS1, SLC7A1, HSP90AA1 and nitric oxide synthase NOS1, NOS2 or NOS3; the complex maintenance is independent of ASL catalytic function. Acetylation modifies enzyme activity in response to alterations of extracellular nutrient availability. Acetylation increased with trichostin A (TSA) or with nicotinamide (NAM). Glucose increases acetylation by about a factor of 3 with decreasing enzyme activity. Acetylation on Lys-288 is decreased on the addition of extra amino acids resulting in activation of enzyme activity. As to expression, expressed in lung and brain (at protein level).

The catalysed reaction is 2-(N(omega)-L-arginino)succinate = fumarate + L-arginine. The protein operates within amino-acid biosynthesis; L-arginine biosynthesis; L-arginine from L-ornithine and carbamoyl phosphate: step 3/3. Its pathway is nitrogen metabolism; urea cycle; L-arginine and fumarate from (N(omega)-L-arginino)succinate: step 1/1. With respect to regulation, enzyme activity is regulated by acetylation. Functionally, catalyzes the reversible cleavage of L-argininosuccinate to fumarate and L-arginine, an intermediate step reaction in the urea cycle mostly providing for hepatic nitrogen detoxification into excretable urea as well as de novo L-arginine synthesis in nonhepatic tissues. Essential regulator of intracellular and extracellular L-arginine pools. As part of citrulline-nitric oxide cycle, forms tissue-specific multiprotein complexes with argininosuccinate synthase ASS1, transport protein SLC7A1 and nitric oxide synthase NOS1, NOS2 or NOS3, allowing for cell-autonomous L-arginine synthesis while channeling extracellular L-arginine to nitric oxide synthesis pathway. This chain is Argininosuccinate lyase (Asl), found in Mus musculus (Mouse).